The primary structure comprises 315 residues: ATP synthase gamma chain (315 aa).

The protein belongs to the ATPase gamma chain family. In terms of assembly, F-type ATPases have 2 components, CF(1) - the catalytic core - and CF(0) - the membrane proton channel. CF(1) has five subunits: alpha(3), beta(3), gamma(1), delta(1), epsilon(1). CF(0) has three main subunits: a, b and c.

It is found in the cellular thylakoid membrane. Its function is as follows. Produces ATP from ADP in the presence of a proton gradient across the membrane. The gamma chain is believed to be important in regulating ATPase activity and the flow of protons through the CF(0) complex. The polypeptide is ATP synthase gamma chain (Synechococcus sp. (strain PCC 6716)).